A 229-amino-acid polypeptide reads, in one-letter code: Potassium/proton antiporter CemA (229 aa).

Transmembrane regions (helical) follow at residues 7–27, 114–134, 154–174, and 189–209; these read FTPL…SLSF, IICF…LVIL, ILLL…ELMV, and IISG…KYWI.

It belongs to the CemA family.

It localises to the plastid. It is found in the chloroplast inner membrane. The enzyme catalyses K(+)(in) + H(+)(out) = K(+)(out) + H(+)(in). In terms of biological role, contributes to K(+)/H(+) antiport activity by supporting proton efflux to control proton extrusion and homeostasis in chloroplasts in a light-dependent manner to modulate photosynthesis. Prevents excessive induction of non-photochemical quenching (NPQ) under continuous-light conditions. Indirectly promotes efficient inorganic carbon uptake into chloroplasts. The protein is Potassium/proton antiporter CemA of Coffea arabica (Arabian coffee).